The sequence spans 382 residues: Na(+)/H(+) antiporter NhaA (382 aa).

The next 11 helical transmembrane spans lie at 14–34 (AGGI…NSSL), 49–69 (MSVS…LIGL), 87–107 (IFPA…YVAF), 117–137 (GWAI…ALLG), 146–166 (VFLL…IAFF), 171–191 (LSVL…LLNA), 205–225 (FILW…GVVL), 252–272 (VAFA…LEGV), 285–305 (VALG…YLAV), 321–341 (IFAV…ISSL), and 356–376 (LGIL…LSIS).

The protein belongs to the NhaA Na(+)/H(+) (TC 2.A.33) antiporter family.

It localises to the cell inner membrane. The catalysed reaction is Na(+)(in) + 2 H(+)(out) = Na(+)(out) + 2 H(+)(in). Its function is as follows. Na(+)/H(+) antiporter that extrudes sodium in exchange for external protons. The protein is Na(+)/H(+) antiporter NhaA of Aliivibrio fischeri (strain ATCC 700601 / ES114) (Vibrio fischeri).